The primary structure comprises 600 residues: Aspartate--tRNA(Asp/Asn) ligase (600 aa).

Glu175 serves as a coordination point for L-aspartate. The aspartate stretch occupies residues 199-202 (QLFK). Arg221 is a binding site for L-aspartate. ATP is bound by residues 221-223 (RDE) and Gln230. L-aspartate is bound at residue His453. ATP is bound at residue Glu487. Residue Arg494 coordinates L-aspartate. Residue 539–542 (GWDR) coordinates ATP. The segment at 564-600 (GGVDPLTDAPAPITPLQRKESGIDAKPKAAENKPEEK) is disordered. Over residues 580–600 (QRKESGIDAKPKAAENKPEEK) the composition is skewed to basic and acidic residues.

Belongs to the class-II aminoacyl-tRNA synthetase family. Type 1 subfamily. In terms of assembly, homodimer.

It is found in the cytoplasm. It catalyses the reaction tRNA(Asx) + L-aspartate + ATP = L-aspartyl-tRNA(Asx) + AMP + diphosphate. In terms of biological role, aspartyl-tRNA synthetase with relaxed tRNA specificity since it is able to aspartylate not only its cognate tRNA(Asp) but also tRNA(Asn). Reaction proceeds in two steps: L-aspartate is first activated by ATP to form Asp-AMP and then transferred to the acceptor end of tRNA(Asp/Asn). The protein is Aspartate--tRNA(Asp/Asn) ligase of Corynebacterium efficiens (strain DSM 44549 / YS-314 / AJ 12310 / JCM 11189 / NBRC 100395).